Here is a 1256-residue protein sequence, read N- to C-terminus: MEEEDESRGKTEESGEDRGDGPPDRDPALSPSAFILRAIQQAVGSSLQGDLPNDKDGARCRGLRWRRCCRSPRSEPRSQESGAADTATVLDTAADSFLVELVSILDPPDTWVPSRLDLQPGESEDMLELVAEVRIGDRDPMPLPVPSLFPRLRAWRTGKTVSPQSHASRPACSRHLTLGTGDGGPAPPPAPSSASSSPSPSPSSSSPSPPPPPPPPPPPALPAPRFDIYDPFHPTDEAYSPPPAPEQKYDPFEPTGSNPSSSAGTPSPEEEEEEEEEEEEEGLSQSISRISETLAGIYDDNSLSQDFPGDDSPRREPPPPQTLGAPGTPPQADSTRAEGAPRRRVFVLGPEAEACHEGKVSVEVVTAGAPALSLPPLPPTDPEIEEGEIVQPEEEPRVAVSLFRAARPRQPPASVATLASVAAPAAPPASAPRAPEGDDFLSLHADSDGEGALQVDLGEPPAPPAADARWGGLDLRRKILTQRRERYRQRSASPGPPPARKKARRERQRSGDPAPPDSPSWEAKKHRSRERKLGSHSTARRRSRSRSRRRSRSRSADRRRGGHRSRSREKRRRRRRSASPPPAASSSSSSRRERHRGKRREGGKKKKKRSRSRAEKRSGDLEKLPASVPPSGSDRDSRRRGAVPPSIQDLTDHDLFAIKRTITVGRPDKAEPRAPSPAPAVSPKREVLYDSEGLSADERGGKSDKDRRRSGAASSSSSSREKGSRRKALDGDRGRDRDRSSKKTRPPKDSTPGSGPLPKAPPSSGSSSSSSSCSSRKVKLQSKVAVLIREGVSSTTPAKDSSSSGLGSIGVKFSRDRESRSPFLKPDERAPAEVAKVAPGSNKPKKTKAKAKAGAKKAKGTKGKTKPSKTRKKVRSGGSSTASGGPGSLKKSKADSCSQAASAKGTEETSWSGEERTTKAPSTPPPKVAPPPPALTPDSQTVDSSCKTPEVSFLPEEASEDTGVRVGAEEEEEEEEEEEEEEEQQPATTTATSTAAAAPSTAPSAGSTAGDSGAEDGPAARISQLPTLPPPMPWNLPAGVDCTTSGVLALTALLFKMEEANLASRAKAQELIQATNQILSHRKPSSTLGVTPAPVPTSLGLPPGPSSYLLPGSLPIGGCGSTPPTPTGLAPASDKREGSSSSEGRGDTDKYLKKLHTQERAVEEVKLAIKPYYQKKDITKEEYKDILRKAVHKICHSKSGEINPVKVSNLVRAYVQRYRYFRKHGRKPGDPPGPPRPPKEPGPPDKGGPGLPLPPL.

Disordered stretches follow at residues 1-33, 158-343, 371-395, 408-1030, 1112-1152, and 1221-1256; these read MEEE…SPSA, GKTV…APRR, ALSL…PEEE, PRQP…TLPP, GSLP…DKYL, and FRKH…LPPL. The span at 7-27 shows a compositional bias: basic and acidic residues; it reads SRGKTEESGEDRGDGPPDRDP. Low complexity predominate over residues 192 to 206; it reads SSASSSPSPSPSSSS. Pro residues predominate over residues 207 to 222; the sequence is PSPPPPPPPPPPPALP. The segment covering 227–236 has biased composition (basic and acidic residues); that stretch reads DIYDPFHPTD. At Ser240 the chain carries Phosphoserine. A compositionally biased stretch (polar residues) spans 255 to 265; the sequence is TGSNPSSSAGT. A compositionally biased stretch (acidic residues) spans 268 to 282; sequence PEEEEEEEEEEEEEG. Thr328 bears the Phosphothreonine mark. Over residues 382-393 the composition is skewed to acidic residues; the sequence is PEIEEGEIVQPE. A compositionally biased stretch (low complexity) spans 412 to 424; it reads PASVATLASVAAP. Ser442 and Ser447 each carry phosphoserine. The span at 478–489 shows a compositional bias: basic residues; the sequence is KILTQRRERYRQ. Ser491, Ser493, Ser510, Ser518, and Ser520 each carry phosphoserine. Basic residues-rich tracts occupy residues 538–553 and 560–577; these read TARR…RSRS and RGGH…RRRS. A phosphoserine mark is found at Ser577 and Ser579. Residues 592–611 show a composition bias toward basic residues; that stretch reads RERHRGKRREGGKKKKKRSR. The span at 612–623 shows a compositional bias: basic and acidic residues; that stretch reads SRAEKRSGDLEK. Position 663 is a phosphothreonine (Thr663). Phosphoserine is present on residues Ser676 and Ser682. At Tyr689 the chain carries Phosphotyrosine. Residues Ser691 and Ser695 each carry the phosphoserine modification. Basic and acidic residues-rich tracts occupy residues 696–709 and 719–741; these read ADER…DRRR and SREK…DRSS. Composition is skewed to low complexity over residues 752–775 and 793–804; these read PGSG…SCSS and SSTTPAKDSSSS. Residue Lys812 forms a Glycyl lysine isopeptide (Lys-Gly) (interchain with G-Cter in SUMO2) linkage. The span at 813–831 shows a compositional bias: basic and acidic residues; the sequence is FSRDRESRSPFLKPDERAP. Phosphoserine occurs at positions 819 and 821. Residues 843–875 show a composition bias toward basic residues; it reads KPKKTKAKAKAGAKKAKGTKGKTKPSKTRKKVR. A phosphoserine mark is found at Ser876, Ser883, Ser910, and Ser912. The segment covering 922–935 has biased composition (pro residues); the sequence is STPPPKVAPPPPAL. Thr923 and Thr936 each carry phosphothreonine. Positions 938–947 are enriched in polar residues; the sequence is DSQTVDSSCK. Ser939 carries the phosphoserine modification. Thr948 is subject to Phosphothreonine. A compositionally biased stretch (acidic residues) spans 969 to 984; the sequence is EEEEEEEEEEEEEEEQ. Over residues 985–1017 the composition is skewed to low complexity; that stretch reads QPATTTATSTAAAAPSTAPSAGSTAGDSGAEDG. A necessary for interaction with the CTD domain of POLR2A region spans residues 1131–1256; sequence PASDKREGSS…GGPGLPLPPL (126 aa). Basic and acidic residues predominate over residues 1133–1152; it reads SDKREGSSSSEGRGDTDKYL. The span at 1244-1256 shows a compositional bias: pro residues; sequence PDKGGPGLPLPPL.

It belongs to the splicing factor SR family. Interacts with POLR2A.

It localises to the nucleus. Functionally, may function in pre-mRNA splicing. This Mus musculus (Mouse) protein is Splicing factor, arginine/serine-rich 19 (Scaf1).